Reading from the N-terminus, the 71-residue chain is Exodeoxyribonuclease 7 small subunit (71 aa).

It belongs to the XseB family. Heterooligomer composed of large and small subunits.

The protein resides in the cytoplasm. The enzyme catalyses Exonucleolytic cleavage in either 5'- to 3'- or 3'- to 5'-direction to yield nucleoside 5'-phosphates.. Functionally, bidirectionally degrades single-stranded DNA into large acid-insoluble oligonucleotides, which are then degraded further into small acid-soluble oligonucleotides. In Clostridium botulinum (strain ATCC 19397 / Type A), this protein is Exodeoxyribonuclease 7 small subunit.